We begin with the raw amino-acid sequence, 64 residues long: Sec-independent protein translocase protein TatA (64 aa).

The chain crosses the membrane as a helical span at residues 10-30 (LVLILGIALIIFGPGKLPELG).

This sequence belongs to the TatA/E family. In terms of assembly, forms a complex with TatC.

The protein resides in the cell membrane. Its function is as follows. Part of the twin-arginine translocation (Tat) system that transports large folded proteins containing a characteristic twin-arginine motif in their signal peptide across membranes. TatA could form the protein-conducting channel of the Tat system. The chain is Sec-independent protein translocase protein TatA from Alkaliphilus oremlandii (strain OhILAs) (Clostridium oremlandii (strain OhILAs)).